The chain runs to 374 residues: MTTNTSELSAAGVSIWLDDLSRERLTSGSLQKLIDEKNVVGVTTNPSIFQAAISKGTSYEQQVSELAAQGADVEAAVFQITTQDVANACDFFAGIAVASKGVDGRVSIEVDPRKAWDTQGTIEEAKRLHAAVGKDNVHIKIPATLEGLEAITETLGAGISVNVTLIFSLGRYRAVINAFLLGIEKAKANGHDLSQIHSVASFFVSRVDTEIDKRLDALNTDEAKSLKGKAGVANARLAYQVFEEVFSSERWALLAEAGALPQRPLWASTGVKDPAYPDTLYVTELVAPNVVNTMPEKTLDATADHGVVSGNTISGRYDEANGVLNALEGLGISYNEVVALLEKEGLEKFVASWKELLDHVQDALNSAATKGSES.

Catalysis depends on K140, which acts as the Schiff-base intermediate with substrate.

Belongs to the transaldolase family. Type 2 subfamily.

The protein resides in the cytoplasm. The catalysed reaction is D-sedoheptulose 7-phosphate + D-glyceraldehyde 3-phosphate = D-erythrose 4-phosphate + beta-D-fructose 6-phosphate. It functions in the pathway carbohydrate degradation; pentose phosphate pathway; D-glyceraldehyde 3-phosphate and beta-D-fructose 6-phosphate from D-ribose 5-phosphate and D-xylulose 5-phosphate (non-oxidative stage): step 2/3. Transaldolase is important for the balance of metabolites in the pentose-phosphate pathway. In Renibacterium salmoninarum (strain ATCC 33209 / DSM 20767 / JCM 11484 / NBRC 15589 / NCIMB 2235), this protein is Transaldolase.